We begin with the raw amino-acid sequence, 298 residues long: Cyclin-dependent kinase 2 (298 aa).

The Protein kinase domain maps to 4–286; sequence FQKVEKIGEG…AKNALVHRFF (283 aa). ATP is bound by residues 10–18, Lys-33, 81–83, and Asp-86; these read IGEGTYGVV and EFL. Thr-14 is subject to Phosphothreonine. Phosphotyrosine is present on Tyr-15. The Proton acceptor role is filled by Asp-127. ATP is bound by residues 129-132 and Asp-145; that span reads KPQN. Thr-160 carries the phosphothreonine; by CAK modification.

It belongs to the protein kinase superfamily. CMGC Ser/Thr protein kinase family. CDC2/CDKX subfamily.

The enzyme catalyses L-seryl-[protein] + ATP = O-phospho-L-seryl-[protein] + ADP + H(+). It catalyses the reaction L-threonyl-[protein] + ATP = O-phospho-L-threonyl-[protein] + ADP + H(+). Phosphorylation at Thr-14 or Tyr-15 inactivates the enzyme, while phosphorylation at Thr-160 activates it. Serine/threonine-protein kinase involved in the control of the cell cycle; essential for meiosis, but dispensable for mitosis. Triggers duplication of centrosomes and DNA. Acts at the G1-S transition to promote the E2F transcriptional program and the initiation of DNA synthesis, and modulates G2 progression; controls the timing of entry into mitosis/meiosis by controlling the subsequent activation of cyclin B/CDK1 by phosphorylation, and coordinates the activation of cyclin B/CDK1 at the centrosome and in the nucleus. Crucial role in orchestrating a fine balance between cellular proliferation, cell death, and DNA repair in embryonic stem cells (ESCs). Activity of CDK2 is maximal during S phase and G2; activated by interaction with cyclin E during the early stages of DNA synthesis to permit G1-S transition, and subsequently activated by cyclin A2 (cyclin A1 in germ cells) during the late stages of DNA replication to drive the transition from S phase to mitosis, the G2 phase. The sequence is that of Cyclin-dependent kinase 2 (cdk2) from Carassius auratus (Goldfish).